Reading from the N-terminus, the 428-residue chain is Lysophosphatidic acid phosphatase type 6 (428 aa).

The transit peptide at 1–32 (MITGVFSMRLWTPVGVLTSLAYCLHQRRVALA) directs the protein to the mitochondrion. Residues 58 to 168 (RHGARSPRKP…VFIRSTNIFR (111 aa)) form a substrate binding region. His59 serves as the catalytic Nucleophile. Asp335 functions as the Proton donor in the catalytic mechanism.

This sequence belongs to the histidine acid phosphatase family. Monomer.

Its subcellular location is the mitochondrion. It catalyses the reaction a phosphate monoester + H2O = an alcohol + phosphate. It carries out the reaction 1-(9Z-octadecenoyl)-sn-glycero-3-phosphate + H2O = 1-(9Z-octadecenoyl)-sn-glycerol + phosphate. Hydrolyzes lysophosphatidic acid (LPA) containing a medium length fatty acid chain to the corresponding monoacylglycerol. Has highest activity with lysophosphatidic acid containing myristate (C14:0), monounsaturated oleate (C18:1) or palmitate (C16:0), and lower activity with C18:0 and C6:0 lysophosphatidic acid. This chain is Lysophosphatidic acid phosphatase type 6 (ACP6), found in Pongo abelii (Sumatran orangutan).